Consider the following 444-residue polypeptide: Prenyltransferase phnF (444 aa).

The protein belongs to the tryptophan dimethylallyltransferase family.

The enzyme catalyses 2,3,4,7,9-pentahydroxy-6-methyl-1H-phenalen-1-one + dimethylallyl diphosphate = 2,4,7,9-tetrahydroxy-6-methyl-8-(2-methylbut-3-en-2-yl)-1-oxo-1H-phenalen-3-ol + diphosphate. Its pathway is secondary metabolite biosynthesis. Functionally, prenyltransferase; part of the gene cluster that mediates the biosynthesis of phenalenones such as herqueinone, compounds that have been reported to treat tumors, bacterial infections and/or mycoses, and rheumatic diseases. The non-reducing polyketide synthase phnA synthesizes the heptaketide backbone and cyclizes it into the angular, hemiketal-containing naphtho-gamma-pyrone prephenalenone. The product template (PT) domain of phnA catalyzes only the C4-C9 aldol condensation, which is unprecedented among known PT domains. The transformation of prephenalenone to phenalenones requires an FAD-dependent monooxygenase phnB, which catalyzes the C2 aromatic hydroxylation of prephenalenone and ring opening of the gamma-pyrone ring simultaneously. Subsequent intramolecular deprotonation of C3 phenolic oxygen accelerates phenalenone ring closure to yield the tricyclic phenalenone core with a C2 hydroxylation. The prenyltransferase phnF further catalyzes reverse C-prenylation of phenalenone by direct electrophilic substitution at C6, or possibly via first a forward O-prenylation of a neighboring phenol in phenalenone, followed by a Claisen rearrangement. The hydroalkoxylation enzyme phnH catalyzes the 5-exo-trig cyclization via acid catalysis after the spontaneous deprotonation of 7-OH, which leads to the formation of the dihydrobenzofuran atrovenetin. Atrovenetin is further converted to deoxyherqueinone by the O-methyltransferase phnC which can methylate C2-OH to stabilize the northern portion of the phenalenone core. Finally, the oxidoreductase phnG converts deoxyherqueinone to herqueinone via C6 hydroxylation. This chain is Prenyltransferase phnF, found in Penicillium herquei.